The following is a 259-amino-acid chain: Sesquipedalian-2 (259 aa).

Residues 17–121 (PADHTGFLRS…WVKALSRASF (105 aa)) enclose the PH domain. Positions 124–150 (MRLVVRELESQLQDARQSLALHRCASQ) form a coiled coil. The interval 155–178 (SCSKSQAPDHRAPDPENGHFLPRD) is disordered. Basic and acidic residues predominate over residues 161–178 (APDHRAPDPENGHFLPRD). Residues 223-235 (CFSTLHDWYGKEI) carry the F&amp;H motif.

Belongs to the sesquipedalian family. As to quaternary structure, forms homodimers and heterodimers with PHETA1. Interacts with OCRL and INPP5B.

The protein localises to the early endosome. The protein resides in the recycling endosome. It localises to the golgi apparatus. It is found in the trans-Golgi network. Its subcellular location is the cytoplasmic vesicle. The protein localises to the clathrin-coated vesicle. In terms of biological role, plays a role in endocytic trafficking. Required for receptor recycling from endosomes, both to the trans-Golgi network and the plasma membrane. The protein is Sesquipedalian-2 of Mus musculus (Mouse).